A 337-amino-acid polypeptide reads, in one-letter code: Adenine deaminase (337 aa).

Residues H17, H19, and H197 each contribute to the Zn(2+) site. Catalysis depends on E200, which acts as the Proton donor. Position 278 (D278) interacts with Zn(2+). D279 contacts substrate.

The protein belongs to the metallo-dependent hydrolases superfamily. Adenosine and AMP deaminases family. Adenine deaminase type 2 subfamily. It depends on Zn(2+) as a cofactor.

The catalysed reaction is adenine + H2O + H(+) = hypoxanthine + NH4(+). In terms of biological role, catalyzes the hydrolytic deamination of adenine to hypoxanthine. Plays an important role in the purine salvage pathway and in nitrogen catabolism. In Zymomonas mobilis subsp. mobilis (strain ATCC 31821 / ZM4 / CP4), this protein is Adenine deaminase.